We begin with the raw amino-acid sequence, 331 residues long: L-lactate dehydrogenase A chain (331 aa).

Residues 29–57 (GMVG…MEDK) and arginine 98 contribute to the NAD(+) site. 3 residues coordinate substrate: arginine 105, asparagine 137, and arginine 168. Residue asparagine 137 coordinates NAD(+). Residue histidine 192 is the Proton acceptor of the active site. Threonine 247 contributes to the substrate binding site.

Belongs to the LDH/MDH superfamily. LDH family. In terms of assembly, homotetramer.

It is found in the cytoplasm. The catalysed reaction is (S)-lactate + NAD(+) = pyruvate + NADH + H(+). Its pathway is fermentation; pyruvate fermentation to lactate; (S)-lactate from pyruvate: step 1/1. Functionally, interconverts simultaneously and stereospecifically pyruvate and lactate with concomitant interconversion of NADH and NAD(+). The protein is L-lactate dehydrogenase A chain (ldha) of Champsocephalus gunnari (Mackerel icefish).